The following is a 190-amino-acid chain: Large ribosomal subunit protein bL9 (190 aa).

This sequence belongs to the bacterial ribosomal protein bL9 family.

In terms of biological role, binds to the 23S rRNA. This chain is Large ribosomal subunit protein bL9, found in Rhodobacter capsulatus (strain ATCC BAA-309 / NBRC 16581 / SB1003).